The chain runs to 368 residues: Putative potassium channel KAT5 (368 aa).

3 helical membrane-spanning segments follow: residues 33–53 (WWHM…PFEL), 97–117 (LLNL…ARVE), and 132–152 (LLCV…WMVF). Residues 180–199 (CAVYWSITTLATVGYGDLHA) constitute an intramembrane region (pore-forming). The helical transmembrane segment at 206-226 (LFSIAFMLFNMGLTSYIIGNI) threads the bilayer. 225–344 (NITNLVVRET…CIVFSNFILV (120 aa)) contacts a nucleoside 3',5'-cyclic phosphate.

This sequence belongs to the potassium channel family. Plant (TC 1.A.1.4) subfamily.

Its subcellular location is the membrane. Functionally, putative inward-rectifying potassium channel. The sequence is that of Putative potassium channel KAT5 from Oryza sativa subsp. japonica (Rice).